The following is a 346-amino-acid chain: Methylthioribose-1-phosphate isomerase (346 aa).

Residues 45–47, R87, and Q194 contribute to the substrate site; that span reads RGA. D235 functions as the Proton donor in the catalytic mechanism. 245 to 246 serves as a coordination point for substrate; the sequence is NK.

The protein belongs to the eIF-2B alpha/beta/delta subunits family. MtnA subfamily.

The catalysed reaction is 5-(methylsulfanyl)-alpha-D-ribose 1-phosphate = 5-(methylsulfanyl)-D-ribulose 1-phosphate. It participates in amino-acid biosynthesis; L-methionine biosynthesis via salvage pathway; L-methionine from S-methyl-5-thio-alpha-D-ribose 1-phosphate: step 1/6. In terms of biological role, catalyzes the interconversion of methylthioribose-1-phosphate (MTR-1-P) into methylthioribulose-1-phosphate (MTRu-1-P). In Syntrophomonas wolfei subsp. wolfei (strain DSM 2245B / Goettingen), this protein is Methylthioribose-1-phosphate isomerase.